Reading from the N-terminus, the 402-residue chain is Arginine deiminase (402 aa).

Residue Cys-392 is the Amidino-cysteine intermediate of the active site.

This sequence belongs to the arginine deiminase family.

It is found in the cytoplasm. It carries out the reaction L-arginine + H2O = L-citrulline + NH4(+). The protein operates within amino-acid degradation; L-arginine degradation via ADI pathway; carbamoyl phosphate from L-arginine: step 1/2. The protein is Arginine deiminase (arcA) of Mycobacterium bovis (strain ATCC BAA-935 / AF2122/97).